A 155-amino-acid chain; its full sequence is Small ribosomal subunit protein uS7 (155 aa).

The protein belongs to the universal ribosomal protein uS7 family. As to quaternary structure, part of the 30S ribosomal subunit. Contacts proteins S9 and S11.

One of the primary rRNA binding proteins, it binds directly to 16S rRNA where it nucleates assembly of the head domain of the 30S subunit. Is located at the subunit interface close to the decoding center, probably blocks exit of the E-site tRNA. This is Small ribosomal subunit protein uS7 from Chlorobium phaeobacteroides (strain BS1).